A 220-amino-acid polypeptide reads, in one-letter code: MKDGAAGSLNGIERRGLMFVLSSPSGAGKTTLSRMLVDEAPGLRMSVSATTRPKRPGEVDGRDYYFVDRPKFDAMVEAGEFLEWANVFDNCYGTPRAPVEAALSAGNDVLFDIDWQGTQQLRSRASNDVVSVFILPPSVQDLEHRLHTRAQDSDEVIRGRMKKAGDEMSHFDAYDYIVVNDNIGVAFESVKAILRAEQLKRERQIGIDAFVREMRRELEK.

The 180-residue stretch at 16 to 195 folds into the Guanylate kinase-like domain; the sequence is GLMFVLSSPS…AFESVKAILR (180 aa). Residue 23–30 participates in ATP binding; the sequence is SPSGAGKT.

It belongs to the guanylate kinase family.

It localises to the cytoplasm. It catalyses the reaction GMP + ATP = GDP + ADP. Essential for recycling GMP and indirectly, cGMP. The polypeptide is Guanylate kinase (Rhodopseudomonas palustris (strain HaA2)).